A 429-amino-acid polypeptide reads, in one-letter code: 3-phosphoshikimate 1-carboxyvinyltransferase (429 aa).

Residues Lys23, Ser24, and Arg28 each contribute to the 3-phosphoshikimate site. Lys23 is a binding site for phosphoenolpyruvate. Phosphoenolpyruvate contacts are provided by Gly95 and Arg123. 3-phosphoshikimate contacts are provided by Ser168, Gln170, Asp316, and Lys343. Gln170 is a phosphoenolpyruvate binding site. Catalysis depends on Asp316, which acts as the Proton acceptor. 2 residues coordinate phosphoenolpyruvate: Arg347 and Arg389.

The protein belongs to the EPSP synthase family. As to quaternary structure, monomer.

The protein resides in the cytoplasm. It carries out the reaction 3-phosphoshikimate + phosphoenolpyruvate = 5-O-(1-carboxyvinyl)-3-phosphoshikimate + phosphate. The protein operates within metabolic intermediate biosynthesis; chorismate biosynthesis; chorismate from D-erythrose 4-phosphate and phosphoenolpyruvate: step 6/7. Functionally, catalyzes the transfer of the enolpyruvyl moiety of phosphoenolpyruvate (PEP) to the 5-hydroxyl of shikimate-3-phosphate (S3P) to produce enolpyruvyl shikimate-3-phosphate and inorganic phosphate. This Bacillus thuringiensis subsp. konkukian (strain 97-27) protein is 3-phosphoshikimate 1-carboxyvinyltransferase.